The primary structure comprises 918 residues: Isoleucine--tRNA ligase (918 aa).

The 'HIGH' region signature appears at 59-69; it reads PYANGHLHIGH. Residue glutamate 570 participates in L-isoleucyl-5'-AMP binding. The 'KMSKS' region signature appears at 611–615; that stretch reads KMSKS. Lysine 614 is an ATP binding site. Zn(2+)-binding residues include cysteine 893, cysteine 896, cysteine 908, and cysteine 911.

This sequence belongs to the class-I aminoacyl-tRNA synthetase family. IleS type 1 subfamily. As to quaternary structure, monomer. Zn(2+) is required as a cofactor.

It localises to the cytoplasm. The catalysed reaction is tRNA(Ile) + L-isoleucine + ATP = L-isoleucyl-tRNA(Ile) + AMP + diphosphate. Its function is as follows. Catalyzes the attachment of isoleucine to tRNA(Ile). As IleRS can inadvertently accommodate and process structurally similar amino acids such as valine, to avoid such errors it has two additional distinct tRNA(Ile)-dependent editing activities. One activity is designated as 'pretransfer' editing and involves the hydrolysis of activated Val-AMP. The other activity is designated 'posttransfer' editing and involves deacylation of mischarged Val-tRNA(Ile). The sequence is that of Isoleucine--tRNA ligase from Campylobacter concisus (strain 13826).